Here is a 132-residue protein sequence, read N- to C-terminus: Small ribosomal subunit protein uS8 (132 aa).

This sequence belongs to the universal ribosomal protein uS8 family. Part of the 30S ribosomal subunit. Contacts proteins S5 and S12.

Its function is as follows. One of the primary rRNA binding proteins, it binds directly to 16S rRNA central domain where it helps coordinate assembly of the platform of the 30S subunit. The polypeptide is Small ribosomal subunit protein uS8 (Methylocella silvestris (strain DSM 15510 / CIP 108128 / LMG 27833 / NCIMB 13906 / BL2)).